The primary structure comprises 107 residues: Small ribosomal subunit protein uS10 (107 aa).

Belongs to the universal ribosomal protein uS10 family. In terms of assembly, part of the 30S ribosomal subunit.

In terms of biological role, involved in the binding of tRNA to the ribosomes. This chain is Small ribosomal subunit protein uS10, found in Deinococcus deserti (strain DSM 17065 / CIP 109153 / LMG 22923 / VCD115).